Consider the following 396-residue polypeptide: Probable peptidoglycan glycosyltransferase FtsW (396 aa).

9 helical membrane passes run 17–37, 61–81, 83–103, 117–137, 159–179, 198–218, 274–294, 316–336, and 350–370; these read FCDG…WVMV, VFVL…MAWW, ANGP…LVAG, GIPL…VYLA, MVMA…AVVV, FLLL…AEPY, FVFA…VIGL, FAAY…FINI, and LPLL…VGML.

Belongs to the SEDS family. FtsW subfamily.

Its subcellular location is the cell inner membrane. It carries out the reaction [GlcNAc-(1-&gt;4)-Mur2Ac(oyl-L-Ala-gamma-D-Glu-L-Lys-D-Ala-D-Ala)](n)-di-trans,octa-cis-undecaprenyl diphosphate + beta-D-GlcNAc-(1-&gt;4)-Mur2Ac(oyl-L-Ala-gamma-D-Glu-L-Lys-D-Ala-D-Ala)-di-trans,octa-cis-undecaprenyl diphosphate = [GlcNAc-(1-&gt;4)-Mur2Ac(oyl-L-Ala-gamma-D-Glu-L-Lys-D-Ala-D-Ala)](n+1)-di-trans,octa-cis-undecaprenyl diphosphate + di-trans,octa-cis-undecaprenyl diphosphate + H(+). Its pathway is cell wall biogenesis; peptidoglycan biosynthesis. Its function is as follows. Peptidoglycan polymerase that is essential for cell division. The chain is Probable peptidoglycan glycosyltransferase FtsW from Halomonas elongata (strain ATCC 33173 / DSM 2581 / NBRC 15536 / NCIMB 2198 / 1H9).